Consider the following 136-residue polypeptide: uncharacterized protein (136 aa).

The protein resides in the mitochondrion. This is an uncharacterized protein from Arabidopsis thaliana (Mouse-ear cress).